The sequence spans 57 residues: uncharacterized protein (57 aa).

The helical transmembrane segment at 34–54 (AALLDAAALVVIPGLLTAAAV) threads the bilayer.

The protein localises to the membrane. This is an uncharacterized protein from Dictyostelium discoideum (Social amoeba).